A 292-amino-acid chain; its full sequence is MAACIAAGYCAAMGLGRSFQAARTLLPKPASIACRVHAGPVRQQSTGPSEPGAFQPPPKPVILDKRRPVELERRFLSPEFIPPRGRTDPLKFQMERKDMLERRKVLHIPEFYVGSILRVTTADPYASGKISQFLGICIQRSGRGLGATFILRNVIEGQGVEICFELYNPRVQEIQVVKLEKRLDDSLLYLRDALPEYSTFDVNMKPEVQEPNQKVPVNELKVKMKPKPWSKRWERPNFNIKGIRFDLCLTEEQMKEAQKWSQPWLEFDMMREYDTSKIEAAIWKEIEASKRS.

Positions 40–61 (PVRQQSTGPSEPGAFQPPPKPV) are disordered. A Phosphoserine modification is found at serine 77.

The protein belongs to the bacterial ribosomal protein bL19 family. In terms of assembly, component of the mitochondrial ribosome large subunit (39S) which comprises a 16S rRNA and about 50 distinct proteins.

Its subcellular location is the mitochondrion. In Pongo abelii (Sumatran orangutan), this protein is Large ribosomal subunit protein bL19m (MRPL19).